A 718-amino-acid chain; its full sequence is Serine/threonine-protein kinase tousled-like 2 (718 aa).

The tract at residues 24–85 (GVSKGPLNSE…KGTPRGHKIS (62 aa)) is disordered. Positions 29–44 (PLNSESSNQSLCSVGS) are enriched in polar residues. Over residues 46–61 (SDKEVETPEKKQNDQR) the composition is skewed to basic and acidic residues. A phosphoserine mark is found at S73, Q94, L99, and S102. The disordered stretch occupies residues 147–176 (QQNSPSSTGSGNTEHSCSSQKQISIQHRQT). Residues 193–244 (NSDLEKKEGRIDDLLRANCDLRRQIDEQQKMLEKYKERLNRCVTMSKKLLIE) are required for interaction with TLK1 and DYNLL1/LC8. Coiled coils occupy residues 193–244 (NSDL…LLIE), 285–315 (AFQNLIKQQERINSQREEIERQRKMLAKRKP), and 349–397 (HEQE…DNSQ). Residues 310–337 (LAKRKPPAMGQAPPATNEQKQRKSKTNG) are disordered. The Protein kinase domain occupies 408-687 (YLLLHLLGRG…VQQLACDPYL (280 aa)). ATP contacts are provided by residues 414-422 (LGRGGFSEV) and K437. D538 functions as the Proton acceptor in the catalytic mechanism. S696 bears the Phosphoserine; by CHEK1 mark.

This sequence belongs to the protein kinase superfamily. Ser/Thr protein kinase family. As to quaternary structure, monomer. May form homodimers; homodimerization may enhance autophosphoylation and enzymatic activity. Heterodimer with TLK1. Interacts with YWHAZ; association with 14-3-3 proteins such as YWHAZ regulates subcellular location. May also interact with FEZ1/LZTS1 and FEZ2. Interacts with CHD7 and CHD8. Interacts with DYNLL1/LC8. It depends on Mg(2+) as a cofactor. In terms of processing, phosphorylated at Ser-696, probably by CHEK1. Post-translationally, autophosphorylated; phosphorylation promotes the assembly of higher order oligomers and enzymatic activity. As to expression, ubiquitously expressed in all tissues examined, with high levels in heart and testis, in particular the pachytene spermatocytes and in round spermatids. Some evidence for the existence of a testis-specific isoform suggesting a role in spermatogenesis.

The protein localises to the nucleus. The protein resides in the nucleoplasm. It is found in the cytoplasm. Its subcellular location is the perinuclear region. It localises to the cytoskeleton. It carries out the reaction L-seryl-[protein] + ATP = O-phospho-L-seryl-[protein] + ADP + H(+). It catalyses the reaction L-threonyl-[protein] + ATP = O-phospho-L-threonyl-[protein] + ADP + H(+). With respect to regulation, cell cycle-regulated, with maximal activity in the S-phase. Rapidly and transiently inhibited by phosphorylation following the generation of DNA double-stranded breaks during S-phase, probably by CHEK1, possibly at Ser-696. This inhibition is cell cycle checkpoint- and ATM-dependent. In terms of biological role, serine/threonine-protein kinase involved in the process of chromatin assembly and probably also DNA replication, transcription, repair, and chromosome segregation. Phosphorylates the chromatin assembly factors ASF1A and ASF1B. Phosphorylation of ASF1A prevents its proteasome-mediated degradation, thereby enhancing chromatin assembly. Negative regulator of amino acid starvation-induced autophagy. Functionally, testis-specific isoforms may play a role in spermatogenesis. Highly expressed in embryos throughout development. In Mus musculus (Mouse), this protein is Serine/threonine-protein kinase tousled-like 2 (Tlk2).